Consider the following 168-residue polypeptide: MLPASLLRHPGLRRLMLQARTYAEAAAAPAPAAGPGQMSFTFASPTQVFFDSANVKQVDVPTLTGAFGILASHVPTLQVLRPGLVVVHTEDGTTTKYFVSSGSVTVNADSSVQLLAEEAVTLDMLDLGAARANLEKAQSELSGAADEAARAEIQIRIEANEALVKALE.

The N-terminal 22 residues, 1–22, are a transit peptide targeting the mitochondrion; it reads MLPASLLRHPGLRRLMLQARTY. Lysine 136 and lysine 165 each carry N6-acetyllysine; alternate. Residues lysine 136 and lysine 165 each carry the N6-succinyllysine; alternate modification.

The protein belongs to the ATPase epsilon chain family. As to quaternary structure, component of the ATP synthase complex composed at least of ATP5F1A/subunit alpha, ATP5F1B/subunit beta, ATP5MC1/subunit c (homooctomer), MT-ATP6/subunit a, MT-ATP8/subunit 8, ATP5ME/subunit e, ATP5MF/subunit f, ATP5MG/subunit g, ATP5MK/subunit k, ATP5MJ/subunit j, ATP5F1C/subunit gamma, ATP5F1D/subunit delta, ATP5F1E/subunit epsilon, ATP5PF/subunit F6, ATP5PB/subunit b, ATP5PD/subunit d, ATP5PO/subunit OSCP. ATP synthase complex consists of a soluble F(1) head domain (subunits alpha(3) and beta(3)) - the catalytic core - and a membrane F(0) domain - the membrane proton channel (subunits c, a, 8, e, f, g, k and j). These two domains are linked by a central stalk (subunits gamma, delta, and epsilon) rotating inside the F1 region and a stationary peripheral stalk (subunits F6, b, d, and OSCP). Component of a complex composed at least by ATPIF1, ATP5F1A, ATP5F1B, ATP5F1C AND ATP5F1E.

It localises to the mitochondrion. The protein resides in the mitochondrion inner membrane. Its function is as follows. Subunit delta, of the mitochondrial membrane ATP synthase complex (F(1)F(0) ATP synthase or Complex V) that produces ATP from ADP in the presence of a proton gradient across the membrane which is generated by electron transport complexes of the respiratory chain. ATP synthase complex consist of a soluble F(1) head domain - the catalytic core - and a membrane F(1) domain - the membrane proton channel. These two domains are linked by a central stalk rotating inside the F(1) region and a stationary peripheral stalk. During catalysis, ATP synthesis in the catalytic domain of F(1) is coupled via a rotary mechanism of the central stalk subunits to proton translocation. In vivo, can only synthesize ATP although its ATP hydrolase activity can be activated artificially in vitro. With the central stalk subunit gamma, is essential for the biogenesis of F(1) catalytic part of the ATP synthase complex namely in the formation of F1 assembly intermediate. The protein is ATP synthase F(1) complex subunit delta, mitochondrial of Mus musculus (Mouse).